The chain runs to 215 residues: uncharacterized protein (215 aa).

6 helical membrane passes run 21-40 (IIKY…VLIN), 50-69 (LIFS…TIIF), 95-117 (FVAI…YVFF), 122-144 (LEIA…LVVL), 157-179 (NFVG…LILQ), and 185-207 (LIFI…SAYL).

Belongs to the CcmB/CycW/HelB family.

Its subcellular location is the cell membrane. This is an uncharacterized protein from Rickettsia prowazekii (strain Madrid E).